Consider the following 219-residue polypeptide: MAEISAKMVQELREKTGAGMMDCKKALTEAGGDLVKAEEVLRKKGLSAAAKKTGRAATEGAVASYIHMGGKIGVLVEVNCETDFVARTEGFQGLVKEIAMQIAAASPRWVRREEVPADVVAKELEIAKAQAREQKKPEAILEKIATGKVEKFYSEFCLMEQAWVKDDKKKIQDVLTDAVAKIGENIQIRRFARFVLGEGLEKKQENLAEEVAKAAGLQK.

The tract at residues 82–85 is involved in Mg(2+) ion dislocation from EF-Tu; that stretch reads TDFV.

This sequence belongs to the EF-Ts family.

It is found in the cytoplasm. Associates with the EF-Tu.GDP complex and induces the exchange of GDP to GTP. It remains bound to the aminoacyl-tRNA.EF-Tu.GTP complex up to the GTP hydrolysis stage on the ribosome. The polypeptide is Elongation factor Ts (Anaeromyxobacter dehalogenans (strain 2CP-C)).